The primary structure comprises 97 residues: MKRICSIYRSKKKDGMYLYVLKSDALERVPEPLMEAFGKAHHAFDMVLTPERKLSREDIAVVLENLDKQGYHLQMPPAEDEYIEHLPEELLRRNDPM.

The YcgL domain occupies 3 to 87 (RICSIYRSKK…AEDEYIEHLP (85 aa)).

The chain is YcgL domain-containing protein PFLU_1517 from Pseudomonas fluorescens (strain SBW25).